A 147-amino-acid chain; its full sequence is Probable disulfide formation protein (147 aa).

The chain crosses the membrane as a helical span at residues 9–28 (NYSLYFAWLTALIATLGSLY). The cysteines at positions 38 and 41 are disulfide-linked. 2 helical membrane-spanning segments follow: residues 43–62 (YQRV…AYRT) and 69–86 (YALP…YQYL). A disulfide bridge connects residues C99 and C106. The chain crosses the membrane as a helical span at residues 115 to 138 (GFITLPFLGMLATLIMSFFLIMAF).

It belongs to the DsbB family. BdbC subfamily.

It localises to the cell inner membrane. Required for disulfide bond formation in some proteins. The chain is Probable disulfide formation protein from Coxiella burnetii (strain CbuK_Q154) (Coxiella burnetii (strain Q154)).